The chain runs to 413 residues: Unsaturated 3S-rhamnoglycuronyl hydrolase (413 aa).

The first 21 residues, Met1–Ala21, serve as a signal peptide directing secretion. Residue Cys22 is the site of N-palmitoyl cysteine attachment. Cys22 is lipidated: S-diacylglycerol cysteine. Asp203 serves as the catalytic Proton donor.

This sequence belongs to the glycosyl hydrolase 105 family.

The protein resides in the cell membrane. Functionally, glucuronyl hydrolase involved in ulvan degradation. Ulvan is the main polysaccharide component of the Ulvales (green seaweed) cell wall. It is composed of disaccharide building blocks comprising 3-sulfated rhamnose (Rha3S) linked to D-glucuronic acid (GlcA), L-iduronic acid (IduA), or D-xylose (Xyl). Unsaturated 3S-rhamnoglycuronyl hydrolase works together with ulvan lyases to fully degrade the ulvan polymer, catalyzing specifically the cleavage of the unsaturated 4-deoxy-L-threo-hex-4-enopyranosiduronic acid (deltaUA) of the deltaUA-oligosaccharides deltaUA-Rha3S, deltaUA-Rha3S-IduA-Rha3S and deltaUA-Rha3S-Xyl-Rha3S, the end products of the ulvan lyase reaction. This chain is Unsaturated 3S-rhamnoglycuronyl hydrolase, found in Alteromonas sp. (strain LOR).